A 218-amino-acid polypeptide reads, in one-letter code: 7-cyano-7-deazaguanine synthase (218 aa).

9–19 (YSGGMDSFTVL) is an ATP binding site. Residues cysteine 185, cysteine 193, cysteine 196, and cysteine 199 each coordinate Zn(2+).

It belongs to the QueC family. It depends on Zn(2+) as a cofactor.

It carries out the reaction 7-carboxy-7-deazaguanine + NH4(+) + ATP = 7-cyano-7-deazaguanine + ADP + phosphate + H2O + H(+). It participates in purine metabolism; 7-cyano-7-deazaguanine biosynthesis. Catalyzes the ATP-dependent conversion of 7-carboxy-7-deazaguanine (CDG) to 7-cyano-7-deazaguanine (preQ(0)). In Alteromonas mediterranea (strain DSM 17117 / CIP 110805 / LMG 28347 / Deep ecotype), this protein is 7-cyano-7-deazaguanine synthase.